The chain runs to 474 residues: Proline--tRNA ligase (474 aa).

Belongs to the class-II aminoacyl-tRNA synthetase family. ProS type 3 subfamily. In terms of assembly, homodimer.

The protein resides in the cytoplasm. It catalyses the reaction tRNA(Pro) + L-proline + ATP = L-prolyl-tRNA(Pro) + AMP + diphosphate. Catalyzes the attachment of proline to tRNA(Pro) in a two-step reaction: proline is first activated by ATP to form Pro-AMP and then transferred to the acceptor end of tRNA(Pro). The polypeptide is Proline--tRNA ligase (Mycoplasma mycoides subsp. mycoides SC (strain CCUG 32753 / NCTC 10114 / PG1)).